Consider the following 156-residue polypeptide: Ribosomal RNA large subunit methyltransferase H (156 aa).

S-adenosyl-L-methionine contacts are provided by residues leucine 73, glycine 104, and 123 to 128; that span reads VSSLTL.

The protein belongs to the RNA methyltransferase RlmH family. In terms of assembly, homodimer.

It is found in the cytoplasm. The catalysed reaction is pseudouridine(1915) in 23S rRNA + S-adenosyl-L-methionine = N(3)-methylpseudouridine(1915) in 23S rRNA + S-adenosyl-L-homocysteine + H(+). Specifically methylates the pseudouridine at position 1915 (m3Psi1915) in 23S rRNA. In Paraburkholderia phytofirmans (strain DSM 17436 / LMG 22146 / PsJN) (Burkholderia phytofirmans), this protein is Ribosomal RNA large subunit methyltransferase H.